The primary structure comprises 863 residues: Alanine--tRNA ligase (863 aa).

Residues histidine 552, histidine 556, cysteine 654, and histidine 658 each contribute to the Zn(2+) site.

This sequence belongs to the class-II aminoacyl-tRNA synthetase family. Requires Zn(2+) as cofactor.

Its subcellular location is the cytoplasm. It catalyses the reaction tRNA(Ala) + L-alanine + ATP = L-alanyl-tRNA(Ala) + AMP + diphosphate. Its function is as follows. Catalyzes the attachment of alanine to tRNA(Ala) in a two-step reaction: alanine is first activated by ATP to form Ala-AMP and then transferred to the acceptor end of tRNA(Ala). Also edits incorrectly charged Ser-tRNA(Ala) and Gly-tRNA(Ala) via its editing domain. The chain is Alanine--tRNA ligase from Nitrosomonas eutropha (strain DSM 101675 / C91 / Nm57).